The chain runs to 189 residues: Glutathione-dependent formaldehyde-activating enzyme (189 aa).

The region spanning 20 to 166 is the CENP-V/GFA domain; sequence FAGGTLVCAC…LRTIGLEPYD (147 aa). Residues Cys27, Cys29, Cys48, Cys50, Cys53, Cys95, and Cys98 each contribute to the Zn(2+) site.

The protein belongs to the Gfa family. Requires Zn(2+) as cofactor.

The catalysed reaction is S-(hydroxymethyl)glutathione = glutathione + formaldehyde. It functions in the pathway one-carbon metabolism; formaldehyde degradation; formate from formaldehyde (glutathione route): step 1/3. Its function is as follows. Catalyzes the condensation of formaldehyde and glutathione to S-hydroxymethylglutathione. The protein is Glutathione-dependent formaldehyde-activating enzyme of Mesorhizobium japonicum (strain LMG 29417 / CECT 9101 / MAFF 303099) (Mesorhizobium loti (strain MAFF 303099)).